A 519-amino-acid polypeptide reads, in one-letter code: Exodeoxyribonuclease 7 large subunit (519 aa).

A disordered region spans residues 493–519 (AISTGKSSNTNRKSAPAREPGKQGSLF). The span at 496–505 (TGKSSNTNRK) shows a compositional bias: polar residues.

It belongs to the XseA family. As to quaternary structure, heterooligomer composed of large and small subunits.

It localises to the cytoplasm. It catalyses the reaction Exonucleolytic cleavage in either 5'- to 3'- or 3'- to 5'-direction to yield nucleoside 5'-phosphates.. Functionally, bidirectionally degrades single-stranded DNA into large acid-insoluble oligonucleotides, which are then degraded further into small acid-soluble oligonucleotides. The chain is Exodeoxyribonuclease 7 large subunit from Chelativorans sp. (strain BNC1).